Reading from the N-terminus, the 105-residue chain is Large ribosomal subunit protein eL30 (105 aa).

It belongs to the eukaryotic ribosomal protein eL30 family.

This is Large ribosomal subunit protein eL30 (RPL30) from Trypanosoma brucei brucei.